Reading from the N-terminus, the 149-residue chain is UPF0178 protein Cphy_3042 (149 aa).

A compositionally biased stretch (basic residues) spans 112–128 (QRRHGKQNLHSKNNKKR). A disordered region spans residues 112–132 (QRRHGKQNLHSKNNKKRTTGD).

This sequence belongs to the UPF0178 family.

In Lachnoclostridium phytofermentans (strain ATCC 700394 / DSM 18823 / ISDg) (Clostridium phytofermentans), this protein is UPF0178 protein Cphy_3042.